A 217-amino-acid polypeptide reads, in one-letter code: Uracil-DNA glycosylase (217 aa).

Aspartate 62 (proton acceptor) is an active-site residue.

Belongs to the uracil-DNA glycosylase (UDG) superfamily. UNG family.

The protein localises to the cytoplasm. It carries out the reaction Hydrolyzes single-stranded DNA or mismatched double-stranded DNA and polynucleotides, releasing free uracil.. Functionally, excises uracil residues from the DNA which can arise as a result of misincorporation of dUMP residues by DNA polymerase or due to deamination of cytosine. This Streptococcus sanguinis (strain SK36) protein is Uracil-DNA glycosylase.